Consider the following 25-residue polypeptide: Ocellatin-L1 (25 aa).

Leu-25 is modified (leucine amide).

The protein belongs to the frog skin active peptide (FSAP) family. Ocellatin subfamily. As to expression, expressed by the skin glands.

The protein localises to the secreted. Functionally, antimicrobial peptide with activity against Gram-negative bacteria but without activity against Gram-positive bacteria. Shows a low activity in stimulating insulin release from rat BRIN-BD11 beta cells, and acts without loss of integrity of the plasma membrane. Has very low hemolytic activity. Shows weak amphipathicity in its alpha-helical conformation. This Leptodactylus laticeps (Santa Fe frog) protein is Ocellatin-L1.